The sequence spans 106 residues: Small ribosomal subunit protein uS10 (106 aa).

The protein belongs to the universal ribosomal protein uS10 family. As to quaternary structure, part of the 30S ribosomal subunit.

Functionally, involved in the binding of tRNA to the ribosomes. The sequence is that of Small ribosomal subunit protein uS10 from Hyphomonas neptunium (strain ATCC 15444).